The primary structure comprises 172 residues: Protein-export protein SecB (172 aa).

Residues 153–172 (AQGQGGDSGIVMPDGSQARH) are disordered.

It belongs to the SecB family. As to quaternary structure, homotetramer, a dimer of dimers. One homotetramer interacts with 1 SecA dimer.

The protein localises to the cytoplasm. One of the proteins required for the normal export of preproteins out of the cell cytoplasm. It is a molecular chaperone that binds to a subset of precursor proteins, maintaining them in a translocation-competent state. It also specifically binds to its receptor SecA. In Cupriavidus metallidurans (strain ATCC 43123 / DSM 2839 / NBRC 102507 / CH34) (Ralstonia metallidurans), this protein is Protein-export protein SecB.